A 332-amino-acid polypeptide reads, in one-letter code: Glycerol-3-phosphate dehydrogenase [NAD(P)+] (332 aa).

Trp-13, Lys-34, and Lys-108 together coordinate NADPH. Lys-108, Gly-136, and Ser-138 together coordinate sn-glycerol 3-phosphate. Position 140 (Ala-140) interacts with NADPH. Sn-glycerol 3-phosphate is bound by residues Lys-191, Asp-244, Ser-254, Arg-255, and Asn-256. Lys-191 (proton acceptor) is an active-site residue. Arg-255 provides a ligand contact to NADPH. Positions 279 and 281 each coordinate NADPH.

This sequence belongs to the NAD-dependent glycerol-3-phosphate dehydrogenase family.

It is found in the cytoplasm. It carries out the reaction sn-glycerol 3-phosphate + NAD(+) = dihydroxyacetone phosphate + NADH + H(+). It catalyses the reaction sn-glycerol 3-phosphate + NADP(+) = dihydroxyacetone phosphate + NADPH + H(+). It participates in membrane lipid metabolism; glycerophospholipid metabolism. Catalyzes the reduction of the glycolytic intermediate dihydroxyacetone phosphate (DHAP) to sn-glycerol 3-phosphate (G3P), the key precursor for phospholipid synthesis. This Francisella tularensis subsp. novicida (strain U112) protein is Glycerol-3-phosphate dehydrogenase [NAD(P)+].